The following is a 295-amino-acid chain: Bifunctional protein FolD (295 aa).

NADP(+) is bound by residues 166-168, Ser-191, and Ile-232; that span reads GRS.

It belongs to the tetrahydrofolate dehydrogenase/cyclohydrolase family. In terms of assembly, homodimer.

The catalysed reaction is (6R)-5,10-methylene-5,6,7,8-tetrahydrofolate + NADP(+) = (6R)-5,10-methenyltetrahydrofolate + NADPH. It catalyses the reaction (6R)-5,10-methenyltetrahydrofolate + H2O = (6R)-10-formyltetrahydrofolate + H(+). It functions in the pathway one-carbon metabolism; tetrahydrofolate interconversion. Catalyzes the oxidation of 5,10-methylenetetrahydrofolate to 5,10-methenyltetrahydrofolate and then the hydrolysis of 5,10-methenyltetrahydrofolate to 10-formyltetrahydrofolate. This is Bifunctional protein FolD from Rhodopseudomonas palustris (strain HaA2).